Reading from the N-terminus, the 1487-residue chain is Golgin subfamily A member 3 (1487 aa).

Position 1 is an N-acetylmethionine (methionine 1). Positions 1–118 (MDGASAKQDG…GTSAEGSVRK (118 aa)) are disordered. Phosphoserine is present on residues serine 18 and serine 60. The segment covering 62-74 (DRSSQVAICQNGQ) has biased composition (polar residues). The segment at 121 to 141 (LQSLRLSLPMQETQLCSTASS) is interaction with GOPC. The tract at residues 172 to 257 (ERSSQPATKM…DYRTEDPSDS (86 aa)) is golgi-targeting domain. Disordered regions lie at residues 221–321 (PKVG…SSLS) and 365–394 (AAQH…SMES). 3 stretches are compositionally biased toward low complexity: residues 269-288 (SSLK…SPSS), 312-321 (SDSSSHSSLS), and 365-375 (AAQHQDQNQEA). Serine 270 carries the phosphoserine modification. Positions 358–1454 (KDVLQAAAAQ…TITVHESLSS (1097 aa)) form a coiled coil. 3 positions are modified to phosphoserine: serine 381, serine 385, and serine 461. Over residues 785-796 (KEELDRGARRLE) the composition is skewed to basic and acidic residues. The disordered stretch occupies residues 785–804 (KEELDRGARRLEEDTEETSG). At serine 979 the chain carries Phosphoserine. The span at 1372 to 1382 (RGAAKKKEPKG) shows a compositional bias: basic and acidic residues. 2 disordered regions span residues 1372–1396 (RGAA…IKIP) and 1458–1487 (VEAA…GLGQ). Phosphoserine is present on serine 1387. Residues 1462-1474 (PAEHAHPRGDTKL) show a composition bias toward basic and acidic residues. Serine 1479 is subject to Phosphoserine.

Homodimer. Interacts with GOLGA7. Interacts with GOPC. Post-translationally, cleaved by caspases in apoptotic cells. In terms of tissue distribution, highly expressed in testis. Transcripts can be found in spermatids during spermatogenesis. No expression in Leydig cells, spermatogonia or spermatocytes. Detected at low levels in all tissues.

Its subcellular location is the cytoplasm. It localises to the golgi apparatus. The protein resides in the golgi stack membrane. Its function is as follows. Plays an important role in spermatogenesis and/or testis development. Probably identical with the serologically detectable male antigen (SDM). Probably involved in maintaining Golgi structure. In Mus musculus (Mouse), this protein is Golgin subfamily A member 3 (Golga3).